The chain runs to 302 residues: Quinolinate synthase (302 aa).

Iminosuccinate is bound by residues His24 and Ser41. A [4Fe-4S] cluster-binding site is contributed by Cys86. Iminosuccinate is bound by residues 112–114 (YVN) and Ser129. Residue Cys173 participates in [4Fe-4S] cluster binding. Residues 199–201 (HPE) and Thr216 each bind iminosuccinate. Cys259 contributes to the [4Fe-4S] cluster binding site.

The protein belongs to the quinolinate synthase family. Type 2 subfamily. Requires [4Fe-4S] cluster as cofactor.

It localises to the cytoplasm. It catalyses the reaction iminosuccinate + dihydroxyacetone phosphate = quinolinate + phosphate + 2 H2O + H(+). The protein operates within cofactor biosynthesis; NAD(+) biosynthesis; quinolinate from iminoaspartate: step 1/1. Catalyzes the condensation of iminoaspartate with dihydroxyacetone phosphate to form quinolinate. This is Quinolinate synthase from Thermococcus onnurineus (strain NA1).